Consider the following 595-residue polypeptide: P2X purinoceptor 7 (595 aa).

Residues 1-22 are Cytoplasmic-facing; that stretch reads MPACCSWNDVFQYETNKVTRIQ. Cys-4 carries the S-palmitoyl cysteine lipid modification. Residues 23–46 traverse the membrane as a helical segment; it reads SVNYGTIKWILHMTVFSYVSFALM. Topologically, residues 47–328 are extracellular; the sequence is SDKLYQRKEP…ILVFGTGGKF (282 aa). Residue Asn-74 is glycosylated (N-linked (GlcNAc...) asparagine). 3 cysteine pairs are disulfide-bonded: Cys-119–Cys-168, Cys-129–Cys-152, and Cys-135–Cys-162. At Arg-125 the chain carries ADP-ribosylarginine. Asn-187 carries N-linked (GlcNAc...) asparagine glycosylation. Residue Thr-189 participates in ATP binding. Residues Asn-202 and Asn-213 are each glycosylated (N-linked (GlcNAc...) asparagine). Residues Cys-216 and Cys-226 are joined by a disulfide bond. Asn-241 is a glycosylation site (N-linked (GlcNAc...) asparagine). A disulfide bond links Cys-260 and Cys-269. An N-linked (GlcNAc...) asparagine glycan is attached at Asn-284. Arg-294 and Lys-311 together coordinate ATP. Residues 329 to 353 form a helical membrane-spanning segment; it reads DIIQLVVYIGSTLSYFGLATVCIDL. Ser-342 is a binding site for Na(+). Topologically, residues 354–595 are cytoplasmic; sequence IINTYASTCC…GQYSGFKYPY (242 aa). The tract at residues 360–377 is C-cys anchor; the sequence is STCCRSRVYPSCKCCEPC. Residues Cys-362, Cys-363, Cys-374, and Cys-377 are each lipidated (S-palmitoyl cysteine). Positions 395 to 595 are cytoplasmic ballast; it reads KPTLKYVSFV…GQYSGFKYPY (201 aa). Zn(2+)-binding residues include Cys-479, Cys-499, and Cys-506. Arg-546, His-547, Tyr-550, and Ala-567 together coordinate GTP. Cys-572 serves as a coordination point for Zn(2+). Residues Lys-583, Ser-589, and Gly-590 each contribute to the GTP site.

It belongs to the P2X receptor family. As to quaternary structure, homotrimer. Interacts with LAMA3, ITGB2, ACTB, ACTN4, SVIL, MPP3, HSPA1, HSPCB, HSPA8, PIK230 and PTPRB. Interacts (via C-terminus) with EMP2. In terms of processing, phosphorylation results in its inactivation. ADP-ribosylation at Arg-125 is necessary and sufficient to activate P2RX7 and gate the channel. Post-translationally, palmitoylation of several cysteines in the C-terminal cytoplasmic tail is required for efficient localization to cell surface. Palmitoylation prevents channel desensitization by physically anchoring the palmitoylated groups to the membrane.

It localises to the cell membrane. It carries out the reaction Ca(2+)(in) = Ca(2+)(out). The enzyme catalyses K(+)(in) = K(+)(out). The catalysed reaction is Na(+)(in) = Na(+)(out). Activated by high extracellular ATP levels (0.1-2.5 mM). The synthetic analog 2'(3')-O-(4-benzoylbenzoyl)ATP (BzATP) acts as a potent agonist. Does not undergo desensitization, instead, undergoes a facilitation process where currents progressively increase with repetitive or prolonged agonist application. Palmitoylation prevents channel desensitization. The permeability of the P2RX7 channel is modulated by the amount of cholesterol in the plasma membrane. Functionally, ATP-gated nonselective transmembrane cation channel that requires high millimolar concentrations of ATP for activation. Upon ATP binding, it rapidly opens to allow the influx of small cations Na(+) and Ca(2+), and the K(+) efflux. Also has the ability to form a large pore in the cell membrane, allowing the passage of large cationic molecules. In microglia, may mediate the transmembrane transport of exogenous NADPH. In immune cells, P2RX7 acts as a molecular sensor in pathological inflammatory states by detecting and responding to high local concentrations of extracellar ATP. In microglial cells, P2RX7 activation leads to the release of pro-inflammatory cytokines, such as IL-1beta and IL-18, through the activation of the NLRP3 inflammasome and caspase-1. Cooperates with KCNK6 to activate NLRP3 inflammasome. Activates death pathways leading to apoptosis and autophagy. Activates death pathways leading to pyroptosis. Its function is as follows. Has a higher affinity for ATP, slower deactivation and an increased propensity to form large cation-permeable pores. This Rattus norvegicus (Rat) protein is P2X purinoceptor 7 (P2rx7).